The primary structure comprises 385 residues: ADP,ATP carrier protein 2, mitochondrial (385 aa).

The transit peptide at 1-74 directs the protein to the mitochondrion; it reads MVEQTQHPTI…ATTTSPVFVQ (74 aa). Solcar repeat units lie at residues 82 to 175, 187 to 280, and 288 to 374; these read TNFA…FKRL, KWFA…VKPV, and DSFF…LQLI. A run of 5 helical transmembrane segments spans residues 84–111, 152–176, 185–205, 256–277, and 291–311; these read FAID…VKLL, TANV…KRLF, YWKW…SSLL, FNIS…YDSV, and FASF…SYPI. 2 residues coordinate ADP: Arg157 and Lys169. Arg315 contributes to the ADP binding site. The important for transport activity stretch occupies residues 315-320; that stretch reads RRRMMM. Residues 315–320 carry the Nucleotide carrier signature motif motif; sequence RRRMMM. The helical transmembrane segment at 351–371 threads the bilayer; the sequence is AGANILRAVAGAGVLAGYDKL.

The protein belongs to the mitochondrial carrier (TC 2.A.29) family. Monomer.

The protein resides in the mitochondrion inner membrane. The catalysed reaction is ADP(in) + ATP(out) = ADP(out) + ATP(in). With respect to regulation, the matrix-open state (m-state) is inhibited by the membrane-permeable bongkrekic acid (BKA). The cytoplasmic-open state (c-state) is inhibited by the membrane-impermeable toxic inhibitor carboxyatractyloside (CATR). ADP:ATP antiporter that mediates import of ADP into the mitochondrial matrix for ATP synthesis, and export of ATP out to fuel the cell. Cycles between the cytoplasmic-open state (c-state) and the matrix-open state (m-state): operates by the alternating access mechanism with a single substrate-binding site intermittently exposed to either the cytosolic (c-state) or matrix (m-state) side of the inner mitochondrial membrane. The sequence is that of ADP,ATP carrier protein 2, mitochondrial (AAC2) from Arabidopsis thaliana (Mouse-ear cress).